Reading from the N-terminus, the 342-residue chain is Probable dual-specificity RNA methyltransferase RlmN (342 aa).

Catalysis depends on Glu-91, which acts as the Proton acceptor. In terms of domain architecture, Radical SAM core spans 97 to 327 (YKHGNSICVS…TTIRREMGAD (231 aa)). Cys-104 and Cys-332 are disulfide-bonded. [4Fe-4S] cluster is bound by residues Cys-111, Cys-115, and Cys-118. Residues 158–159 (GE), Ser-190, 213–215 (SLH), and Asn-289 each bind S-adenosyl-L-methionine. Cys-332 (S-methylcysteine intermediate) is an active-site residue.

Belongs to the radical SAM superfamily. RlmN family. Requires [4Fe-4S] cluster as cofactor.

It localises to the cytoplasm. The enzyme catalyses adenosine(2503) in 23S rRNA + 2 reduced [2Fe-2S]-[ferredoxin] + 2 S-adenosyl-L-methionine = 2-methyladenosine(2503) in 23S rRNA + 5'-deoxyadenosine + L-methionine + 2 oxidized [2Fe-2S]-[ferredoxin] + S-adenosyl-L-homocysteine. The catalysed reaction is adenosine(37) in tRNA + 2 reduced [2Fe-2S]-[ferredoxin] + 2 S-adenosyl-L-methionine = 2-methyladenosine(37) in tRNA + 5'-deoxyadenosine + L-methionine + 2 oxidized [2Fe-2S]-[ferredoxin] + S-adenosyl-L-homocysteine. In terms of biological role, specifically methylates position 2 of adenine 2503 in 23S rRNA and position 2 of adenine 37 in tRNAs. The protein is Probable dual-specificity RNA methyltransferase RlmN of Clostridium botulinum (strain Loch Maree / Type A3).